Consider the following 349-residue polypeptide: Aminomethyltransferase (349 aa).

Belongs to the GcvT family. The glycine cleavage system is composed of four proteins: P, T, L and H.

It carries out the reaction N(6)-[(R)-S(8)-aminomethyldihydrolipoyl]-L-lysyl-[protein] + (6S)-5,6,7,8-tetrahydrofolate = N(6)-[(R)-dihydrolipoyl]-L-lysyl-[protein] + (6R)-5,10-methylene-5,6,7,8-tetrahydrofolate + NH4(+). Functionally, the glycine cleavage system catalyzes the degradation of glycine. The sequence is that of Aminomethyltransferase from Thermus thermophilus (strain ATCC 27634 / DSM 579 / HB8).